The chain runs to 360 residues: MKSTLLNKKSQQTTPAWEFFCSWVTTTENRLYLGWFGCLMVPTLVSATFAYIIGFLAAPPVDIDGIREPVSGSLLYANNIISGAVIPSSNAMGVHFYPIWEAASLDEWLYNGGTYQLVVFHFFIGVCSYLGREWELSYRLGMRPWIFVAFSAPVAAASAVFIVYPIGQGSFSDGMPLGISGTFNFMLVFQAEHNILMHPLHMFGVAAVFGGSLFSAMHGSLVTSSLLKETAEFESANYGYRFGQSTETYNIVAAHGYFGRLIFQYASFNNSRSLHFFLGAWPVVGIWLTAMGVSTMAFNLNGLNFQQSILDASGCPINTWADILNRANLGMEVMHERNAHNFPLDLACANCLLSLWPMVG.

The next 3 helical transmembrane spans lie at 32 to 49, 121 to 136, and 145 to 159; these read YLGWFGCLMVPTLVSATF, HFFIGVCSYLGREWEL, and WIFVAFSAPVAAASA. A chlorophyll a-binding site is contributed by histidine 121. Tyrosine 129 is a binding site for pheophytin a. 2 residues coordinate [CaMn4O5] cluster: aspartate 173 and glutamate 192. Residues 200 to 221 form a helical membrane-spanning segment; that stretch reads LHMFGVAAVFGGSLFSAMHGSL. Histidine 201 provides a ligand contact to chlorophyll a. A quinone contacts are provided by residues histidine 218 and 267 to 268; that span reads SF. Histidine 218 lines the Fe cation pocket. Histidine 275 provides a ligand contact to Fe cation. The chain crosses the membrane as a helical span at residues 277-291; sequence FLGAWPVVGIWLTAM. The [CaMn4O5] cluster site is built by histidine 335, glutamate 336, aspartate 345, and alanine 347. Residues 348–360 constitute a propeptide that is removed on maturation; that stretch reads CANCLLSLWPMVG.

This sequence belongs to the reaction center PufL/M/PsbA/D family. In terms of assembly, PSII is composed of 1 copy each of membrane proteins PsbA, PsbB, PsbC, PsbD, PsbE, PsbF, PsbH, PsbI, PsbJ, PsbK, PsbL, PsbM, PsbT, PsbX, PsbY, PsbZ, Psb30/Ycf12, at least 3 peripheral proteins of the oxygen-evolving complex and a large number of cofactors. It forms dimeric complexes. It depends on The D1/D2 heterodimer binds P680, chlorophylls that are the primary electron donor of PSII, and subsequent electron acceptors. It shares a non-heme iron and each subunit binds pheophytin, quinone, additional chlorophylls, carotenoids and lipids. D1 provides most of the ligands for the Mn4-Ca-O5 cluster of the oxygen-evolving complex (OEC). There is also a Cl(-1) ion associated with D1 and D2, which is required for oxygen evolution. The PSII complex binds additional chlorophylls, carotenoids and specific lipids. as a cofactor. In terms of processing, tyr-164 forms a radical intermediate that is referred to as redox-active TyrZ, YZ or Y-Z. Post-translationally, C-terminally processed by CtpA; processing is essential to allow assembly of the oxygen-evolving complex and thus photosynthetic growth.

It is found in the plastid. The protein localises to the chloroplast thylakoid membrane. The catalysed reaction is 2 a plastoquinone + 4 hnu + 2 H2O = 2 a plastoquinol + O2. Photosystem II (PSII) is a light-driven water:plastoquinone oxidoreductase that uses light energy to abstract electrons from H(2)O, generating O(2) and a proton gradient subsequently used for ATP formation. It consists of a core antenna complex that captures photons, and an electron transfer chain that converts photonic excitation into a charge separation. The D1/D2 (PsbA/PsbD) reaction center heterodimer binds P680, the primary electron donor of PSII as well as several subsequent electron acceptors. This chain is Photosystem II protein D1, found in Karenia mikimotoi (Red tide dinoflagellate).